A 108-amino-acid chain; its full sequence is Replication initiation control protein YabA (108 aa).

The Zn(2+) site is built by histidine 83, cysteine 85, cysteine 99, and cysteine 102.

Belongs to the YabA family. As to quaternary structure, homotetramer. Interacts with both DnaA and DnaN, acting as a bridge between these two proteins. Requires Zn(2+) as cofactor.

It is found in the cytoplasm. It localises to the nucleoid. Its function is as follows. Involved in control of chromosome replication initiation. Inhibits the cooperative binding of DnaA to the oriC region, thus negatively regulating initiation of chromosome replication. Inhibits the ability of DnaA-ATP to form a helix on DNA; does not disassemble preformed DnaA-DNA helices. Decreases the residence time of DnaA on the chromosome at its binding sites (oriC, replication forks and promoter-binding sites). Tethers DnaA to the replication machinery via the DNA polymerase beta sliding clamp subunit (dnaN). Associates with oriC and other DnaA targets on the chromosome in a DnaA-dependent manner. In Lactococcus lactis subsp. cremoris (strain SK11), this protein is Replication initiation control protein YabA.